The following is a 276-amino-acid chain: MGIKKYNPTTNGRRNMTTNDFAEITTDRPEKSLLAPLSKKAGRNNQGKITVRHQGGGHKRQYRIIDFKRNKDGIPGRVATIEYDPNRSANIALINYVDGEKRYILAPKNLEVGMEIMSGAEADIKIGNALPLINIPVGTVVHNIELKPGRGGQLVRSAGTSAQVLGKEGKYVLVRLTSGEVRLVLSACRATVGQVGNESHELIKIGKAGRSRWLGKRPTVRGSVMNPVDHPHGGGEGRSPIGRKSPMSPWGKPTLGFKTRKKNKASDKFIVRRRKK.

Disordered stretches follow at residues 1 to 20 and 219 to 276; these read MGIK…TTND and TVRG…RRKK. The segment covering 7 to 20 has biased composition (polar residues); the sequence is NPTTNGRRNMTTND.

This sequence belongs to the universal ribosomal protein uL2 family. Part of the 50S ribosomal subunit. Forms a bridge to the 30S subunit in the 70S ribosome.

Its function is as follows. One of the primary rRNA binding proteins. Required for association of the 30S and 50S subunits to form the 70S ribosome, for tRNA binding and peptide bond formation. It has been suggested to have peptidyltransferase activity; this is somewhat controversial. Makes several contacts with the 16S rRNA in the 70S ribosome. This chain is Large ribosomal subunit protein uL2, found in Bacillus anthracis (strain A0248).